A 721-amino-acid chain; its full sequence is DNA ligase (721 aa).

The segment covering 1–19 (MTAKKQGAQASASAPSGDS) has biased composition (low complexity). The segment at 1–23 (MTAKKQGAQASASAPSGDSPAER) is disordered. NAD(+)-binding positions include 48-52 (DADYD), 97-98 (SL), and glutamate 162. Residue lysine 164 is the N6-AMP-lysine intermediate of the active site. 4 residues coordinate NAD(+): arginine 185, glutamate 221, lysine 338, and lysine 362. Zn(2+)-binding residues include cysteine 456, cysteine 459, cysteine 474, and cysteine 480. Residues 639–721 (RAPLPLAGKT…LKLLAEVGAA (83 aa)) form the BRCT domain.

The protein belongs to the NAD-dependent DNA ligase family. LigA subfamily. It depends on Mg(2+) as a cofactor. Mn(2+) is required as a cofactor.

The catalysed reaction is NAD(+) + (deoxyribonucleotide)n-3'-hydroxyl + 5'-phospho-(deoxyribonucleotide)m = (deoxyribonucleotide)n+m + AMP + beta-nicotinamide D-nucleotide.. Functionally, DNA ligase that catalyzes the formation of phosphodiester linkages between 5'-phosphoryl and 3'-hydroxyl groups in double-stranded DNA using NAD as a coenzyme and as the energy source for the reaction. It is essential for DNA replication and repair of damaged DNA. This Cupriavidus metallidurans (strain ATCC 43123 / DSM 2839 / NBRC 102507 / CH34) (Ralstonia metallidurans) protein is DNA ligase.